A 198-amino-acid chain; its full sequence is Probable GTP-binding protein EngB (198 aa).

Positions 21 to 195 (NIPEVCFVGR…YDALIRLLEV (175 aa)) constitute an EngB-type G domain. GTP-binding positions include 29 to 36 (GRSNVGKS), 56 to 60 (GKTRL), 75 to 78 (DAPG), 142 to 145 (TKLD), and 174 to 176 (VSN). 2 residues coordinate Mg(2+): Ser36 and Thr58.

The protein belongs to the TRAFAC class TrmE-Era-EngA-EngB-Septin-like GTPase superfamily. EngB GTPase family. Mg(2+) is required as a cofactor.

In terms of biological role, necessary for normal cell division and for the maintenance of normal septation. This chain is Probable GTP-binding protein EngB, found in Mesoplasma florum (strain ATCC 33453 / NBRC 100688 / NCTC 11704 / L1) (Acholeplasma florum).